A 123-amino-acid chain; its full sequence is Cytochrome c-555 (123 aa).

A signal peptide spans 1–27; sequence MDHKKTSIRTTALAALVLGAVAAPAFS. Heme c-binding residues include Cys-46, Cys-49, His-50, and Met-86.

In terms of processing, binds 1 heme c group covalently per subunit.

The polypeptide is Cytochrome c-555 (Methylococcus capsulatus (strain ATCC 33009 / NCIMB 11132 / Bath)).